Reading from the N-terminus, the 1043-residue chain is Glutamate receptor ionotropic, NMDA 3B (1043 aa).

The N-terminal stretch at 1–22 is a signal peptide; sequence MEFVRALWLGLALALGPGSAGG. Over 23-574 the chain is Extracellular; the sequence is HPQPCGVLAR…PIGAFMWPLH (552 aa). 4 N-linked (GlcNAc...) asparagine glycosylation sites follow: N69, N344, N451, and N465. Intrachain disulfides connect C439–C475 and C445–C476. Glycine is bound by residues S531, S533, and R538. S533 and R538 together coordinate D-serine. The helical transmembrane segment at 575–594 threads the bilayer; it reads WSTWLGVFAALHLTALFLTV. Residues 595–615 lie on the Cytoplasmic side of the membrane; sequence YEWRSPYGLTPRGRNRSTVFS. Residues 616–627 constitute an intramembrane region (discontinuously helical); that stretch reads YSSALNLCYAIL. Over 628–641 the chain is Cytoplasmic; it reads FRRTVSSKTPKCPT. Residues 642-661 traverse the membrane as a helical segment; the sequence is GRLLMNLWAIFCLLVLSSYT. Residues 662 to 832 lie on the Extracellular side of the membrane; sequence ANLAAVMVGD…TLQMSIYHFA (171 aa). S701 contributes to the glycine binding site. Residues S701, A702, and D745 each coordinate D-serine. D745 lines the glycine pocket. A glycan (N-linked (GlcNAc...) asparagine) is linked at N786. The helical transmembrane segment at 833-848 threads the bilayer; that stretch reads GLFVLLCLGLGSALLS. Topologically, residues 849-1043 are cytoplasmic; the sequence is SLGEHAFFRL…PHSGRPGSQE (195 aa). 2 disordered regions span residues 882–924 and 1012–1043; these read ALNT…WKRA and GDSARHRPRRLLQARAAPAEAPPHSGRPGSQE. An involved in the trafficking and surface expression of NMDARs region spans residues 979-1012; it reads QPGELQELERRIEVARERLRQALVRRGQLLAQLG. The span at 1024–1035 shows a compositional bias: low complexity; that stretch reads QARAAPAEAPPH.

This sequence belongs to the glutamate-gated ion channel (TC 1.A.10.1) family. NR3B/GRIN3B subfamily. In terms of assembly, forms heterotetrameric channels that contain at least two GluN1 subunits and at least a combination of one GluN2 and one GluN3 subunits (in vitro). Forms heterotetrameric channels composed of two GluN1/zeta subunits (GRIN1), and two identical GluN3 subunits (GRIN3A or GRIN3B) (in vitro). Does not form functional homomeric channels.

It is found in the cell membrane. Its subcellular location is the postsynaptic cell membrane. The enzyme catalyses Ca(2+)(in) = Ca(2+)(out). It catalyses the reaction Na(+)(in) = Na(+)(out). Its function is as follows. Component of a non-conventional N-methyl-D-aspartate (NMDA) receptors (NMDARs) that function as heterotetrameric, ligand-gated cation channels with low calcium permeability and low voltage-dependent block by Mg(2+). Forms glutamatergic receptor complexes with GluN1 and GluN2 subunits which are activated by glycine binding to the GluN1 and GluN3 subunits and L-glutamate binding to GluN2 subunits. Forms excitatory glycinergic receptor complexes with GluN1 alone which are activated by glycine binding to the GluN1 and GluN3 subunits. GluN3B subunit also binds D-serine and, in the absence of glycine, activates glycinergic receptor complexes, but with lower efficacy than glycine. Each GluN3 subunit confers differential attributes to channel properties, including activation, deactivation and desensitization kinetics, pH sensitivity, Ca2(+) permeability, and binding to allosteric modulators. The chain is Glutamate receptor ionotropic, NMDA 3B from Homo sapiens (Human).